The primary structure comprises 205 residues: Large ribosomal subunit protein bL25 (205 aa).

Positions Phe178–Glu205 are disordered. Residues Glu182–Glu197 are compositionally biased toward acidic residues.

Belongs to the bacterial ribosomal protein bL25 family. CTC subfamily. In terms of assembly, part of the 50S ribosomal subunit; part of the 5S rRNA/L5/L18/L25 subcomplex. Contacts the 5S rRNA. Binds to the 5S rRNA independently of L5 and L18.

Its function is as follows. This is one of the proteins that binds to the 5S RNA in the ribosome where it forms part of the central protuberance. The sequence is that of Large ribosomal subunit protein bL25 from Cutibacterium acnes (strain DSM 16379 / KPA171202) (Propionibacterium acnes).